A 261-amino-acid polypeptide reads, in one-letter code: uncharacterized protein (261 aa).

Polar residues predominate over residues 20–34 (TMSTPFLESDNSNTQ). The segment at 20-55 (TMSTPFLESDNSNTQSISGRIGSNNNSNSKNSGGIG) is disordered. A compositionally biased stretch (low complexity) spans 35–51 (SISGRIGSNNNSNSKNS). The next 3 membrane-spanning stretches (helical) occupy residues 113–133 (LFSGLFGGGFILTFILCILLL), 183–200 (LIFWITLYGTPIFWILFF), and 204–226 (IISLQFAWILIPIIALSLNMANV).

It belongs to the TVP23 family.

The protein resides in the membrane. This is an uncharacterized protein from Dictyostelium discoideum (Social amoeba).